The following is a 233-amino-acid chain: 2-phytyl-1,4-naphtoquinone methyltransferase (233 aa).

Belongs to the class I-like SAM-binding methyltransferase superfamily. MenG/UbiE family.

It catalyses the reaction demethylphylloquinol + S-adenosyl-L-methionine = phylloquinol + S-adenosyl-L-homocysteine + H(+). It functions in the pathway cofactor biosynthesis; phylloquinone biosynthesis. Functionally, methyltransferase required for the conversion of 2-phytyl-1,4-beta-naphthoquinol to phylloquinol. This Synechococcus elongatus (strain ATCC 33912 / PCC 7942 / FACHB-805) (Anacystis nidulans R2) protein is 2-phytyl-1,4-naphtoquinone methyltransferase.